Here is a 479-residue protein sequence, read N- to C-terminus: 6-phosphogluconate dehydrogenase, decarboxylating (479 aa).

NADP(+) contacts are provided by residues 10 to 15 (GLAVMG), 33 to 35 (NRS), 75 to 77 (IKA), and Asn-103. Residues Asn-103 and 129–131 (SGG) each bind substrate. The Proton acceptor role is filled by Lys-183. Substrate is bound at residue 186–187 (HN). Glu-190 acts as the Proton donor in catalysis. Positions 191, 260, 287, 447, and 453 each coordinate substrate.

It belongs to the 6-phosphogluconate dehydrogenase family. In terms of assembly, homodimer.

It catalyses the reaction 6-phospho-D-gluconate + NADP(+) = D-ribulose 5-phosphate + CO2 + NADPH. It functions in the pathway carbohydrate degradation; pentose phosphate pathway; D-ribulose 5-phosphate from D-glucose 6-phosphate (oxidative stage): step 3/3. In terms of biological role, catalyzes the oxidative decarboxylation of 6-phosphogluconate to ribulose 5-phosphate and CO(2), with concomitant reduction of NADP to NADPH. This Chlamydia muridarum (strain MoPn / Nigg) protein is 6-phosphogluconate dehydrogenase, decarboxylating (gnd).